A 293-amino-acid chain; its full sequence is Triplex capsid protein 2 (293 aa).

This sequence belongs to the herpesviridae TRX2 protein family. In terms of assembly, interacts with TRX1 and major capisd protein/MCP.

The protein resides in the virion. The protein localises to the host nucleus. Functionally, structural component of the T=16 icosahedral capsid. The capsid is composed of pentamers and hexamers of major capsid protein/MCP, which are linked together by heterotrimers called triplexes. These triplexes are formed by a single molecule of triplex protein 1/TRX1 and two copies of triplex protein 2/TRX2. Additionally, TRX1 is required for efficient transport of TRX2 to the nucleus, which is the site of capsid assembly. In Homo sapiens (Human), this protein is Triplex capsid protein 2.